The chain runs to 397 residues: MTLLNPFFGEFGGMYVPQILIPALLQLEKAFVDAQEDPAFIAEFQELLTEYAGRPTPLTLTRNLTKGTKTRLYLKREDLLHGGAHKTNQVLGQALLAKRMGKTEIIAETGAGQHGVATALACALLGLKCRVYMGAKDCERQKPNVFRMKLMGATVIPVHSGSSTLKDACNEALRDWAASYDNAHYLLGTAAGPHPFPTIVREFQKMIGEEAKAQCFKKEERLPDAVIACVGGGSNAIGMFADFIDNKEVRLIGVEPGGHGIESGEHGAPLGHGSKGVFFGMHSYLMQDKQGQIQESYSVSAGLDFPSVGPQHAHLASIGRAEYVSITDKEALDAFQELAKSEGIIPALESSHALAHALKMARSEPEKELVLIVNLSGRGDKDIFTVADIFEKEGTLS.

Lys-86 carries the N6-(pyridoxal phosphate)lysine modification.

This sequence belongs to the TrpB family. As to quaternary structure, tetramer of two alpha and two beta chains. It depends on pyridoxal 5'-phosphate as a cofactor.

It catalyses the reaction (1S,2R)-1-C-(indol-3-yl)glycerol 3-phosphate + L-serine = D-glyceraldehyde 3-phosphate + L-tryptophan + H2O. It participates in amino-acid biosynthesis; L-tryptophan biosynthesis; L-tryptophan from chorismate: step 5/5. In terms of biological role, the beta subunit is responsible for the synthesis of L-tryptophan from indole and L-serine. The chain is Tryptophan synthase beta chain from Aeromonas salmonicida (strain A449).